The chain runs to 241 residues: MTDIKYKRVLMKLSGEALAGDKGQGIDLETVSAIAEELKDVHDLGTQIAIVVGGGNLWRGEPASKIGMERSRADYTGMLGTTMNALVLQDSLERAGVQTRVQTAITMQQIAEPYIRGRAIRHLEKGRIVIFAAGTGSPYFSTDTTAALRANEINADAILMGKNGVDGIYDSDPNKNANAVKFTELTHLDILQKGLKVMDSTASSLSMDNNMPLVVFNLNTPGNLKRVVLGEAIGTTVTGEK.

Residue 12–15 participates in ATP binding; the sequence is KLSG. The involved in allosteric activation by GTP stretch occupies residues 20 to 25; it reads GDKGQG. Gly54 lines the UMP pocket. Positions 55 and 59 each coordinate ATP. UMP contacts are provided by residues Asp74 and 135-142; that span reads TGSPYFST. ATP is bound by residues Asn163, Tyr169, and Asp172.

The protein belongs to the UMP kinase family. As to quaternary structure, homohexamer.

It localises to the cytoplasm. It carries out the reaction UMP + ATP = UDP + ADP. It functions in the pathway pyrimidine metabolism; CTP biosynthesis via de novo pathway; UDP from UMP (UMPK route): step 1/1. Its activity is regulated as follows. Allosterically activated by GTP. Inhibited by UTP. Its function is as follows. Catalyzes the reversible phosphorylation of UMP to UDP. This Leuconostoc mesenteroides subsp. mesenteroides (strain ATCC 8293 / DSM 20343 / BCRC 11652 / CCM 1803 / JCM 6124 / NCDO 523 / NBRC 100496 / NCIMB 8023 / NCTC 12954 / NRRL B-1118 / 37Y) protein is Uridylate kinase.